The sequence spans 72 residues: Alpha-elapitoxin-Dv2b (72 aa).

5 disulfide bridges follow: C3–C21, C14–C42, C27–C31, C46–C57, and C58–C63.

Belongs to the three-finger toxin family. Long-chain subfamily. Type II alpha-neurotoxin sub-subfamily. In terms of processing, neurotoxin 4.7.3 differs from 4.9.3 only in that Trp-26 has undergone partial photooxidation. As to expression, expressed by the venom gland.

The protein localises to the secreted. Its function is as follows. Binds with high affinity to muscular (alpha-1/CHRNA1) and neuronal (alpha-7/CHRNA7) nicotinic acetylcholine receptor (nAChR) and inhibits acetylcholine from binding to the receptor, thereby impairing neuromuscular and neuronal transmission. This chain is Alpha-elapitoxin-Dv2b, found in Dendroaspis viridis (Western green mamba).